Here is a 158-residue protein sequence, read N- to C-terminus: Crossover junction endodeoxyribonuclease RuvC (158 aa).

Catalysis depends on residues D7, E67, and D139. Mg(2+) is bound by residues D7, E67, and D139.

The protein belongs to the RuvC family. In terms of assembly, homodimer which binds Holliday junction (HJ) DNA. The HJ becomes 2-fold symmetrical on binding to RuvC with unstacked arms; it has a different conformation from HJ DNA in complex with RuvA. In the full resolvosome a probable DNA-RuvA(4)-RuvB(12)-RuvC(2) complex forms which resolves the HJ. Mg(2+) is required as a cofactor.

It is found in the cytoplasm. It carries out the reaction Endonucleolytic cleavage at a junction such as a reciprocal single-stranded crossover between two homologous DNA duplexes (Holliday junction).. In terms of biological role, the RuvA-RuvB-RuvC complex processes Holliday junction (HJ) DNA during genetic recombination and DNA repair. Endonuclease that resolves HJ intermediates. Cleaves cruciform DNA by making single-stranded nicks across the HJ at symmetrical positions within the homologous arms, yielding a 5'-phosphate and a 3'-hydroxyl group; requires a central core of homology in the junction. The consensus cleavage sequence is 5'-(A/T)TT(C/G)-3'. Cleavage occurs on the 3'-side of the TT dinucleotide at the point of strand exchange. HJ branch migration catalyzed by RuvA-RuvB allows RuvC to scan DNA until it finds its consensus sequence, where it cleaves and resolves the cruciform DNA. The sequence is that of Crossover junction endodeoxyribonuclease RuvC from Prochlorococcus marinus (strain MIT 9211).